Reading from the N-terminus, the 384-residue chain is 4-coumarate--CoA ligase (384 aa).

Belongs to the ATP-dependent AMP-binding enzyme family.

It carries out the reaction (E)-4-coumarate + ATP + CoA = (E)-4-coumaroyl-CoA + AMP + diphosphate. Functionally, converts p-coumaric acid into p-coumaryl CoA. This is necessary for the activation of the photoactive yellow protein (PYP) chromophore. This Rhodobacter capsulatus (strain ATCC BAA-309 / NBRC 16581 / SB1003) protein is 4-coumarate--CoA ligase (pcl).